The primary structure comprises 270 residues: Maximins-S type D (270 aa).

A signal peptide spans 1–18 (MNFNYFILVLFFITSGHA). 2 consecutive propeptides follow at residues 19–35 (KSETREVHQEAENHIKR) and 52–65 (SAEEQNLAEHLVTR). Asparagine amide is present on N83. The propeptide occupies 87–100 (SAEEQDLAEDLVTR). K118 carries the lysine amide modification. Positions 122-135 (SAEDQDLAEDLVTR) are excised as a propeptide. Residue N153 is modified to Asparagine amide. A propeptide spanning residues 157–170 (SAEEQDLAEHLVTR) is cleaved from the precursor. The residue at position 188 (N188) is an Asparagine amide. Residues 192 to 205 (SAEEQDLVEDLVTR) constitute a propeptide that is removed on maturation. The residue at position 223 (K223) is a Lysine amide. The propeptide occupies 227-240 (SAEEQDLAEDLVTR). K258 bears the Lysine amide mark. Positions 262–270 (SAEQEKDMK) are excised as a propeptide.

The protein belongs to the maximin-S family. As to expression, expressed by the skin dorsal glands.

The protein resides in the secreted. In terms of biological role, maximin-S1 has no antimicrobial activity. Has no hemolytic activity. Functionally, maximin-S2 has an activity against mycoplasma but has no activity against common Gram-positive and Gram-negative bacteria nor fungi. Has no hemolytic activity. Maximin-S3 has an activity against mycoplasma but has no activity against common Gram-positive and Gram-negative bacteria nor fungi. Has no hemolytic activity. Its function is as follows. Maximin-S4 has an activity against mycoplasma but has no activity against common Gram-positive and Gram-negative bacteria nor fungi. Has no hemolytic activity. In terms of biological role, maximin-S5 has an activity against mycoplasma but has no activity against common Gram-positive and Gram-negative bacteria nor fungi. Has no hemolytic activity. The protein is Maximins-S type D of Bombina maxima (Giant fire-bellied toad).